A 260-amino-acid polypeptide reads, in one-letter code: Cytosolic Fe-S cluster assembly factor Nubp2 homolog (260 aa).

14 to 21 (GKGGVGKS) lines the ATP pocket. [4Fe-4S] cluster is bound by residues Cys188 and Cys191.

The protein belongs to the Mrp/NBP35 ATP-binding proteins family. NUBP2/CFD1 subfamily. Heterotetramer of 2 Nubp1 and 2 Nubp2 chains. The cofactor is [4Fe-4S] cluster.

It is found in the cytoplasm. Functionally, component of the cytosolic iron-sulfur (Fe/S) protein assembly (CIA) machinery. Required for maturation of extramitochondrial Fe-S proteins. The Nubp1-Nubp2 heterotetramer forms a Fe-S scaffold complex, mediating the de novo assembly of an Fe-S cluster and its transfer to target apoproteins. This Drosophila melanogaster (Fruit fly) protein is Cytosolic Fe-S cluster assembly factor Nubp2 homolog.